Consider the following 314-residue polypeptide: 4-hydroxy-3-methylbut-2-enyl diphosphate reductase (314 aa).

Cys-12 serves as a coordination point for [4Fe-4S] cluster. (2E)-4-hydroxy-3-methylbut-2-enyl diphosphate-binding residues include His-41 and His-74. The dimethylallyl diphosphate site is built by His-41 and His-74. Residues His-41 and His-74 each coordinate isopentenyl diphosphate. Cys-96 serves as a coordination point for [4Fe-4S] cluster. (2E)-4-hydroxy-3-methylbut-2-enyl diphosphate is bound at residue His-124. A dimethylallyl diphosphate-binding site is contributed by His-124. Isopentenyl diphosphate is bound at residue His-124. Glu-126 (proton donor) is an active-site residue. Thr-168 lines the (2E)-4-hydroxy-3-methylbut-2-enyl diphosphate pocket. Cys-198 contacts [4Fe-4S] cluster. The (2E)-4-hydroxy-3-methylbut-2-enyl diphosphate site is built by Ser-226, Ser-227, Asn-228, and Ser-270. Residues Ser-226, Ser-227, Asn-228, and Ser-270 each contribute to the dimethylallyl diphosphate site. Residues Ser-226, Ser-227, Asn-228, and Ser-270 each contribute to the isopentenyl diphosphate site.

Belongs to the IspH family. The cofactor is [4Fe-4S] cluster.

It carries out the reaction isopentenyl diphosphate + 2 oxidized [2Fe-2S]-[ferredoxin] + H2O = (2E)-4-hydroxy-3-methylbut-2-enyl diphosphate + 2 reduced [2Fe-2S]-[ferredoxin] + 2 H(+). It catalyses the reaction dimethylallyl diphosphate + 2 oxidized [2Fe-2S]-[ferredoxin] + H2O = (2E)-4-hydroxy-3-methylbut-2-enyl diphosphate + 2 reduced [2Fe-2S]-[ferredoxin] + 2 H(+). It functions in the pathway isoprenoid biosynthesis; dimethylallyl diphosphate biosynthesis; dimethylallyl diphosphate from (2E)-4-hydroxy-3-methylbutenyl diphosphate: step 1/1. It participates in isoprenoid biosynthesis; isopentenyl diphosphate biosynthesis via DXP pathway; isopentenyl diphosphate from 1-deoxy-D-xylulose 5-phosphate: step 6/6. Functionally, catalyzes the conversion of 1-hydroxy-2-methyl-2-(E)-butenyl 4-diphosphate (HMBPP) into a mixture of isopentenyl diphosphate (IPP) and dimethylallyl diphosphate (DMAPP). Acts in the terminal step of the DOXP/MEP pathway for isoprenoid precursor biosynthesis. This Ectopseudomonas mendocina (strain ymp) (Pseudomonas mendocina) protein is 4-hydroxy-3-methylbut-2-enyl diphosphate reductase.